Reading from the N-terminus, the 425-residue chain is UPF0597 protein VSAL_I0741 (425 aa).

The protein belongs to the UPF0597 family.

The polypeptide is UPF0597 protein VSAL_I0741 (Aliivibrio salmonicida (strain LFI1238) (Vibrio salmonicida (strain LFI1238))).